A 668-amino-acid polypeptide reads, in one-letter code: Patellin-5 (668 aa).

The tract at residues 1 to 263 is disordered; the sequence is MSQDSATTTP…STTTSTVASR (263 aa). Composition is skewed to basic and acidic residues over residues 55–68, 82–100, 107–125, and 132–150; these read ESNH…EKVT, AAED…ETAK, TAED…ETVK, and VAED…ETVK. Residues 170–186 are compositionally biased toward polar residues; sequence TPETETSEADTSLLVTS. The span at 218 to 231 shows a compositional bias: acidic residues; the sequence is VEDWTEPELPDEAV. Residues 244–254 are compositionally biased toward pro residues; that stretch reads PEPQTPPPPPS. Position 290 is a phosphoserine (S290). Positions 377–552 constitute a CRAL-TRIO domain; that stretch reads DENLGDDLDK…QYGGLSVDNC (176 aa). One can recognise a GOLD domain in the interval 556 to 662; it reads SDFTHDDIAT…KKMLIYRFKV (107 aa).

The protein belongs to the patellin family.

The protein resides in the membrane. The protein localises to the cytoplasm. Carrier protein that may be involved in membrane-trafficking events associated with cell plate formation during cytokinesis. Binds to some hydrophobic molecules such as phosphoinositides and promotes their transfer between the different cellular sites. This Arabidopsis thaliana (Mouse-ear cress) protein is Patellin-5 (PATL5).